The primary structure comprises 672 residues: Nuclear RNA export factor 1 (672 aa).

Disordered stretches follow at residues 1–52 (MPKR…SFKP) and 73–101 (DEDD…IPRG). A compositionally biased stretch (basic residues) spans 40-49 (RKDRNKRRVS). The 81-residue stretch at 113-193 (WYQVTLQNAQ…PRVRSGIPLV (81 aa)) folds into the RRM domain. 4 LRR repeats span residues 255–280 (DLEA…KRLP), 281–304 (NLKI…LRNL), 305–332 (SILE…EVRR), and 333–360 (KFPK…GRLL). The 155-residue stretch at 375–529 (VVRQFLDQYF…FCIRNETIFI (155 aa)) folds into the NTF2 domain. A disordered region spans residues 541–564 (KRSQHQPAPGAMPSTSSAVTSPQA). Over residues 553–563 (PSTSSAVTSPQ) the composition is skewed to polar residues. Serine 561 is modified (phosphoserine). In terms of domain architecture, TAP-C spans 618 to 672 (STKMQMIEAMSAQSQMNVIWSRKCLEETNWDFNHAAFVFEKLFKENKIPPEAFMK).

This sequence belongs to the NXF family. In terms of assembly, interacts with Nxt1. Interacts with ZC3H3. Forms a complex with Nup358/RanBP2, RanGAP and Nxt1. Interacts with Nup54 and Nup58. Interacts with Orc3 and Hpr1. As to expression, expressed ubiquitously.

Its subcellular location is the nucleus. It is found in the nucleoplasm. The protein resides in the cytoplasm. It localises to the nucleus envelope. Its function is as follows. Mediates the export of the majority of mRNAs from the nucleus to the cytoplasm. In ovarian follicle cells, plays a role in transposable element silencing regulation by enabling the nuclear export of flamenco (flam) transcripts and subsequent piRNA biogenesis. The protein is Nuclear RNA export factor 1 of Drosophila melanogaster (Fruit fly).